The primary structure comprises 322 residues: Glycerol-3-phosphate dehydrogenase [NAD(P)+] (322 aa).

Residues Trp13, His33, and Lys99 each contribute to the NADPH site. Sn-glycerol 3-phosphate-binding residues include Lys99, Gly127, and Ser129. Ala131 serves as a coordination point for NADPH. Residues Lys182, Asp235, Ser245, Arg246, and Asn247 each contribute to the sn-glycerol 3-phosphate site. Lys182 functions as the Proton acceptor in the catalytic mechanism. Arg246 contributes to the NADPH binding site. Glu272 contacts NADPH.

This sequence belongs to the NAD-dependent glycerol-3-phosphate dehydrogenase family.

It localises to the cytoplasm. The catalysed reaction is sn-glycerol 3-phosphate + NAD(+) = dihydroxyacetone phosphate + NADH + H(+). It carries out the reaction sn-glycerol 3-phosphate + NADP(+) = dihydroxyacetone phosphate + NADPH + H(+). The protein operates within membrane lipid metabolism; glycerophospholipid metabolism. Its function is as follows. Catalyzes the reduction of the glycolytic intermediate dihydroxyacetone phosphate (DHAP) to sn-glycerol 3-phosphate (G3P), the key precursor for phospholipid synthesis. This Ruthia magnifica subsp. Calyptogena magnifica protein is Glycerol-3-phosphate dehydrogenase [NAD(P)+].